A 1556-amino-acid chain; its full sequence is uncharacterized protein (1556 aa).

Position 2 is an N-acetylserine (S2). The span at 145 to 156 (NQLENRKSLERK) shows a compositional bias: basic and acidic residues. Residues 145–170 (NQLENRKSLERKPSRKRRKKNSNVND) form a disordered region. The Helicase ATP-binding domain occupies 378-583 (SGDYPVCAKG…MIMSYLKLHP (206 aa)). Position 391–398 (391–398 (EEMGLGKT)) interacts with ATP. Residue S810 is modified to Phosphoserine. The tract at residues 810–850 (SEDEDEHMDERFGEKETSSGDESDREINGAKNHDNHNNDGM) is disordered. Basic and acidic residues-rich tracts occupy residues 817–827 (MDERFGEKETS) and 834–846 (REIN…DNHN). The RING-type zinc finger occupies 1239 to 1277 (CSICLGEVEIGAIIKCGHYFCKSCILTWLRAHSKCPICK). A compositionally biased stretch (basic and acidic residues) spans 1297 to 1309 (REKEIQEPRREGA). Disordered stretches follow at residues 1297 to 1319 (REKE…SNEN) and 1508 to 1534 (EKSK…AKFE). Residues 1310–1319 (DSSQDNSNEN) show a composition bias toward low complexity. A Helicase C-terminal domain is found at 1363-1531 (KLISYLRLKS…ETDNEESDDA (169 aa)). The segment covering 1508–1518 (EKSKKGDKYDE) has biased composition (basic and acidic residues). Over residues 1519–1529 (AQDETDNEESD) the composition is skewed to acidic residues.

It belongs to the SNF2/RAD54 helicase family.

Its subcellular location is the nucleus. In terms of biological role, is probably involved in a pathway contributing to genomic integrity. This is an uncharacterized protein from Saccharomyces cerevisiae (strain ATCC 204508 / S288c) (Baker's yeast).